The primary structure comprises 579 residues: Nuclear hormone receptor family member nhr-71 (579 aa).

Residues 8–83 constitute a DNA-binding region (nuclear receptor); sequence SQECMVCSAP…AGMKIGAVQP (76 aa). 2 NR C4-type zinc fingers span residues 11–31 and 47–71; these read CMVCSAPADGLHYGAISCRSC and CKHTNTCLIDPDGRCACRSCRFTKC. Disordered stretches follow at residues 82–124 and 168–189; these read QPRR…SDGP and EPIPSTSSAPEKQSCQSSPNDD. Composition is skewed to polar residues over residues 106–124 and 171–186; these read SMNNSPLERNGNSFSSDGP and PSTSSAPEKQSCQSSP. Positions 189–452 constitute an NR LBD domain; sequence DEQQEFNHLV…KFWYETLCYA (264 aa).

The protein belongs to the nuclear hormone receptor family.

Its subcellular location is the nucleus. In terms of biological role, orphan nuclear receptor. This is Nuclear hormone receptor family member nhr-71 (nhr-71) from Caenorhabditis elegans.